A 370-amino-acid polypeptide reads, in one-letter code: NSFL1 cofactor p47 (370 aa).

Positions 54-73 are enriched in polar residues; that stretch reads SQATPSSVSRGTAPSDNRVT. The interval 54–116 is disordered; that stretch reads SQATPSSVSR…VGPPRKKSPN (63 aa). Phosphoserine is present on residues serine 74, serine 102, serine 114, and serine 140. A Nuclear localization signal motif is present at residues 109–115; sequence PPRKKSP. The residue at position 167 (tyrosine 167) is a Phosphotyrosine. Residues 172 to 175 carry the Nuclear localization signal motif; that stretch reads KRQH. Residues serine 176, serine 192, and serine 272 each carry the phosphoserine modification. In terms of domain architecture, SEP spans 179 to 244; sequence DVHVVLKLWK…MEDHRDEDFV (66 aa). Over residues 261-287 the composition is skewed to polar residues; sequence GSTAPQVLSTSSPAQQAENEAKASSSI. Residues 261-289 are disordered; the sequence is GSTAPQVLSTSSPAQQAENEAKASSSILI. The UBX domain maps to 291–368; sequence ESEPTTNIQI…NLLNAVIVQR (78 aa).

Belongs to the NSFL1C family. As to quaternary structure, part of a ternary complex containing STX5A, NSFL1C and VCP. NSFL1C forms a homotrimer that binds to one end of a VCP homohexamer. The complex binds to membranes enriched in phosphatidylethanolamine-containing lipids and promotes Golgi membrane fusion. Interaction with VCIP135 leads to dissociation of the complex via ATP hydrolysis by VCP. Binds ubiquitin and mono-ubiquitinated proteins via its N-terminal UBA-like domain when bound to VCP. In terms of processing, phosphorylated during mitosis. Phosphorylation inhibits interaction with Golgi membranes and is required for the fragmentation of the Golgi stacks during mitosis.

It is found in the nucleus. The protein localises to the golgi apparatus. It localises to the golgi stack. Its subcellular location is the chromosome. The protein resides in the cytoplasm. It is found in the cytoskeleton. The protein localises to the microtubule organizing center. It localises to the centrosome. Reduces the ATPase activity of VCP. Necessary for the fragmentation of Golgi stacks during mitosis and for VCP-mediated reassembly of Golgi stacks after mitosis. May play a role in VCP-mediated formation of transitional endoplasmic reticulum (tER). Inhibits the activity of CTSL (in vitro). Together with UBXN2B/p37, regulates the centrosomal levels of kinase AURKA/Aurora A during mitotic progression by promoting AURKA removal from centrosomes in prophase. Also, regulates spindle orientation during mitosis. The polypeptide is NSFL1 cofactor p47 (NSFL1C) (Homo sapiens (Human)).